We begin with the raw amino-acid sequence, 31 residues long: Cytochrome b6-f complex subunit 6 (31 aa).

The chain crosses the membrane as a helical span at residues 4–24 (LTSYFGFLLAALTITLALFIG).

Belongs to the PetL family. As to quaternary structure, the 4 large subunits of the cytochrome b6-f complex are cytochrome b6, subunit IV (17 kDa polypeptide, PetD), cytochrome f and the Rieske protein, while the 4 small subunits are PetG, PetL, PetM and PetN. The complex functions as a dimer.

The protein resides in the plastid. The protein localises to the chloroplast thylakoid membrane. Its function is as follows. Component of the cytochrome b6-f complex, which mediates electron transfer between photosystem II (PSII) and photosystem I (PSI), cyclic electron flow around PSI, and state transitions. PetL is important for photoautotrophic growth as well as for electron transfer efficiency and stability of the cytochrome b6-f complex. In Triticum aestivum (Wheat), this protein is Cytochrome b6-f complex subunit 6.